Consider the following 314-residue polypeptide: Probable cell division protein WhiA (314 aa).

Residues 275–309 (SLKELGELVTSGAISKSGVNHRLKKIDEFAEKIKR) constitute a DNA-binding region (H-T-H motif).

The protein belongs to the WhiA family.

Functionally, involved in cell division and chromosome segregation. The chain is Probable cell division protein WhiA from Oceanobacillus iheyensis (strain DSM 14371 / CIP 107618 / JCM 11309 / KCTC 3954 / HTE831).